A 180-amino-acid chain; its full sequence is E3 ubiquitin-protein ligase RNF5 (180 aa).

At Ala2 the chain carries N-acetylalanine. Residues 27-68 (CNICLETAREAVVSVCGHLYCWPCLHQWLETRPERQECPVCK) form an RING-type zinc finger. Residues 79-110 (LYGRGSQKPQDPRLKTPPRPQGQRPAPESRGG) are disordered. Position 84 is a phosphoserine (Ser84). Thr94 is modified (phosphothreonine). Ser107 carries the phosphoserine modification. A run of 2 helical transmembrane segments spans residues 118-138 (GGFH…TTVF) and 160-180 (SWQD…LLSI).

This sequence belongs to the RNF5 family. Interacts with PXN. Interacts with Salmonella typhimurium sopA. Interacts with JKAMP. Interacts with STING1; the interaction of endogenous proteins is dependent on viral infection. As to expression, widely expressed.

Its subcellular location is the cell membrane. It is found in the mitochondrion membrane. The protein localises to the endoplasmic reticulum membrane. The catalysed reaction is S-ubiquitinyl-[E2 ubiquitin-conjugating enzyme]-L-cysteine + [acceptor protein]-L-lysine = [E2 ubiquitin-conjugating enzyme]-L-cysteine + N(6)-ubiquitinyl-[acceptor protein]-L-lysine.. Its pathway is protein modification; protein ubiquitination. Membrane-bound E3 ubiquitin-protein ligase that mediates ubiquitination of target proteins. May function together with E2 ubiquitin-conjugating enzymes UBE2D1/UBCH5A and UBE2D2/UBC4. Mediates ubiquitination of PXN/paxillin,thereby regulating cell motility and localization of PXN/paxillin. Catalyzes ubiquitination of Salmonella type III secreted protein sopA. Mediates the 'Lys-63'-linked polyubiquitination of JKAMP thereby regulating JKAMP function by decreasing its association with components of the proteasome and ERAD; the ubiquitination appears to involve E2 ubiquitin-conjugating enzyme UBE2N. Mediates the 'Lys-48'-linked polyubiquitination of STING1 at 'Lys-150' leading to its proteasomal degradation; the ubiquitination occurs in mitochondria after viral transfection and regulates antiviral responses. Catalyzes ubiquitination and subsequent degradation of ATG4B, thereby inhibiting autophagy. The sequence is that of E3 ubiquitin-protein ligase RNF5 from Homo sapiens (Human).